The sequence spans 351 residues: Small ribosomal subunit biogenesis GTPase RsgA (351 aa).

Residues 1–12 (MAKHKLSKGQQR) show a composition bias toward basic residues. The segment at 1–37 (MAKHKLSKGQQRRVRENHQRRLKKQDNKPEMDDNQLG) is disordered. Residues 13 to 31 (RVRENHQRRLKKQDNKPEM) show a composition bias toward basic and acidic residues. Residues 112 to 274 (YYDGIKPIAA…VIDSPGVREF (163 aa)) enclose the CP-type G domain. Residues 160–163 (NKID) and 214–222 (GQSGVGKSS) each bind GTP. 4 residues coordinate Zn(2+): C298, C303, H305, and C311.

This sequence belongs to the TRAFAC class YlqF/YawG GTPase family. RsgA subfamily. Monomer. Associates with 30S ribosomal subunit, binds 16S rRNA. It depends on Zn(2+) as a cofactor.

It localises to the cytoplasm. Its function is as follows. One of several proteins that assist in the late maturation steps of the functional core of the 30S ribosomal subunit. Helps release RbfA from mature subunits. May play a role in the assembly of ribosomal proteins into the subunit. Circularly permuted GTPase that catalyzes slow GTP hydrolysis, GTPase activity is stimulated by the 30S ribosomal subunit. The protein is Small ribosomal subunit biogenesis GTPase RsgA of Photorhabdus laumondii subsp. laumondii (strain DSM 15139 / CIP 105565 / TT01) (Photorhabdus luminescens subsp. laumondii).